Here is a 642-residue protein sequence, read N- to C-terminus: Arginine--tRNA ligase (642 aa).

Positions 133–143 (VNPTKPLHMGH) match the 'HIGH' region motif.

The protein belongs to the class-I aminoacyl-tRNA synthetase family.

The protein resides in the cytoplasm. The enzyme catalyses tRNA(Arg) + L-arginine + ATP = L-arginyl-tRNA(Arg) + AMP + diphosphate. The chain is Arginine--tRNA ligase from Thermococcus kodakarensis (strain ATCC BAA-918 / JCM 12380 / KOD1) (Pyrococcus kodakaraensis (strain KOD1)).